We begin with the raw amino-acid sequence, 294 residues long: Phosphoribosylaminoimidazole-succinocarboxamide synthase (294 aa).

Belongs to the SAICAR synthetase family.

It carries out the reaction 5-amino-1-(5-phospho-D-ribosyl)imidazole-4-carboxylate + L-aspartate + ATP = (2S)-2-[5-amino-1-(5-phospho-beta-D-ribosyl)imidazole-4-carboxamido]succinate + ADP + phosphate + 2 H(+). It functions in the pathway purine metabolism; IMP biosynthesis via de novo pathway; 5-amino-1-(5-phospho-D-ribosyl)imidazole-4-carboxamide from 5-amino-1-(5-phospho-D-ribosyl)imidazole-4-carboxylate: step 1/2. This is Phosphoribosylaminoimidazole-succinocarboxamide synthase from Thermoplasma acidophilum (strain ATCC 25905 / DSM 1728 / JCM 9062 / NBRC 15155 / AMRC-C165).